A 644-amino-acid chain; its full sequence is Ribonuclease R (644 aa).

The RNB domain occupies 211–529 (RINYSHIPFI…LHRLLKELLF (319 aa)). An S1 motif domain is found at 573 to 644 (LEFLEKEFLG…ITERIKEHVS (72 aa)).

This sequence belongs to the RNR ribonuclease family. RNase R subfamily.

Its subcellular location is the cytoplasm. It catalyses the reaction Exonucleolytic cleavage in the 3'- to 5'-direction to yield nucleoside 5'-phosphates.. In terms of biological role, 3'-5' exoribonuclease that releases 5'-nucleoside monophosphates and is involved in maturation of structured RNAs. The sequence is that of Ribonuclease R from Helicobacter pylori (strain J99 / ATCC 700824) (Campylobacter pylori J99).